The primary structure comprises 109 residues: Glutaredoxin-8 (109 aa).

Residues 5 to 109 (VTKAEEMIKS…EELTKIGLLP (105 aa)) form the Glutaredoxin domain. A disulfide bond links cysteine 25 and cysteine 28.

Belongs to the glutaredoxin family. Monomer.

The protein resides in the cytoplasm. In terms of biological role, glutathione-dependent oxidoreductase with lower activity compared to the other members of the glutaredoxin family. The disulfide bond functions as an electron carrier in the glutathione-dependent synthesis of deoxyribonucleotides by the enzyme ribonucleotide reductase. This chain is Glutaredoxin-8 (GRX8), found in Saccharomyces cerevisiae (strain ATCC 204508 / S288c) (Baker's yeast).